The primary structure comprises 297 residues: Protease HtpX homolog (297 aa).

2 consecutive transmembrane segments (helical) span residues 5-25 (IFLFLLSNILVITTIGIVLSI) and 44-64 (IVALLVFSAVVGFVGSFMSLL). His-155 contributes to the Zn(2+) binding site. Glu-156 is an active-site residue. Residue His-159 participates in Zn(2+) binding. The next 2 membrane-spanning stretches (helical) occupy residues 170–190 (LLQGIVNTFVVFFARIAAWAV) and 204–224 (FIAVIVFQIVFSILGSLVVFA). Residue Glu-230 participates in Zn(2+) binding.

It belongs to the peptidase M48B family. Requires Zn(2+) as cofactor.

The protein localises to the cell membrane. The chain is Protease HtpX homolog from Bacillus licheniformis (strain ATCC 14580 / DSM 13 / JCM 2505 / CCUG 7422 / NBRC 12200 / NCIMB 9375 / NCTC 10341 / NRRL NRS-1264 / Gibson 46).